The chain runs to 102 residues: Protamine-2 (102 aa).

Ser-8, Ser-10, and Ser-37 each carry phosphoserine. Disordered stretches follow at residues Glu-15–Val-41 and Ile-66–His-102.

This sequence belongs to the protamine P2 family. Interacts with TDRP. Proteolytic processing into mature chains is required for histone eviction during spermatogenesis. Transition proteins (TNP1 and TNP2) are required for processing. Testis.

It is found in the nucleus. Its subcellular location is the chromosome. In terms of biological role, protamines substitute for histones in the chromatin of sperm during the haploid phase of spermatogenesis. They compact sperm DNA into a highly condensed, stable and inactive complex. In Pongo pygmaeus (Bornean orangutan), this protein is Protamine-2 (PRM2).